Here is a 568-residue protein sequence, read N- to C-terminus: Oxygen-dependent choline dehydrogenase (568 aa).

8-37 (DYIIIGAGSAGNTLAARLTEDAGVTVLLLE) contributes to the FAD binding site. Histidine 477 functions as the Proton acceptor in the catalytic mechanism.

This sequence belongs to the GMC oxidoreductase family. It depends on FAD as a cofactor.

The catalysed reaction is choline + A = betaine aldehyde + AH2. The enzyme catalyses betaine aldehyde + NAD(+) + H2O = glycine betaine + NADH + 2 H(+). The protein operates within amine and polyamine biosynthesis; betaine biosynthesis via choline pathway; betaine aldehyde from choline (cytochrome c reductase route): step 1/1. Functionally, involved in the biosynthesis of the osmoprotectant glycine betaine. Catalyzes the oxidation of choline to betaine aldehyde and betaine aldehyde to glycine betaine at the same rate. This chain is Oxygen-dependent choline dehydrogenase, found in Pseudomonas syringae pv. tomato (strain ATCC BAA-871 / DC3000).